Reading from the N-terminus, the 496-residue chain is Galactose-1-phosphate uridylyltransferase (496 aa).

Belongs to the galactose-1-phosphate uridylyltransferase type 2 family.

The protein localises to the cytoplasm. It catalyses the reaction alpha-D-galactose 1-phosphate + UDP-alpha-D-glucose = alpha-D-glucose 1-phosphate + UDP-alpha-D-galactose. Its pathway is carbohydrate metabolism; galactose metabolism. This chain is Galactose-1-phosphate uridylyltransferase, found in Staphylococcus saprophyticus subsp. saprophyticus (strain ATCC 15305 / DSM 20229 / NCIMB 8711 / NCTC 7292 / S-41).